The chain runs to 586 residues: NADH-quinone oxidoreductase subunit C/D 2 (586 aa).

The tract at residues 1 to 173 (MKWVNKGTVE…RTDPPSHDFE (173 aa)) is NADH dehydrogenase I subunit C. An NADH dehydrogenase I subunit D region spans residues 197-586 (AELVLNWGPL…LDPVVGETDR (390 aa)).

In the N-terminal section; belongs to the complex I 30 kDa subunit family. The protein in the C-terminal section; belongs to the complex I 49 kDa subunit family. In terms of assembly, NDH-1 is composed of 13 different subunits. Subunits NuoB, CD, E, F, and G constitute the peripheral sector of the complex.

The protein resides in the cell inner membrane. The enzyme catalyses a quinone + NADH + 5 H(+)(in) = a quinol + NAD(+) + 4 H(+)(out). In terms of biological role, NDH-1 shuttles electrons from NADH, via FMN and iron-sulfur (Fe-S) centers, to quinones in the respiratory chain. The immediate electron acceptor for the enzyme in this species is believed to be ubiquinone. Couples the redox reaction to proton translocation (for every two electrons transferred, four hydrogen ions are translocated across the cytoplasmic membrane), and thus conserves the redox energy in a proton gradient. In Aquifex aeolicus (strain VF5), this protein is NADH-quinone oxidoreductase subunit C/D 2 (nuoC2).